The primary structure comprises 1005 residues: Small G protein signaling modulator 2 (1005 aa).

The RUN domain maps to 34-191 (HEDSSHIIAL…EYTKLKTADH (158 aa)). 2 disordered regions span residues 95-121 (QAEG…KAPA) and 205-236 (HRIR…SASE). A phosphoserine mark is found at serine 402 and leucine 444. The region spanning 566-938 (GVEHEIRKDV…AVWEVIWAAR (373 aa)) is the Rab-GAP TBC domain. 2 disordered regions span residues 657–687 (FISV…AGTP) and 729–761 (GFED…QETL). Residues 672 to 681 (EDSKPKREQE) are compositionally biased toward basic and acidic residues. Positions 730-740 (FEDDGAGEDGS) are enriched in acidic residues.

This sequence belongs to the RUTBC family. In terms of assembly, interacts with RAB4A, RAB11A, RAP1A, RAP1B, RAP2A and RAP2B. No interaction with RAB27A. Interacts with RAB9A. In terms of tissue distribution, widely expressed.

It is found in the cytoplasm. Its subcellular location is the melanosome. Functionally, possesses GTPase activator activity towards RAB32, RAB33B and RAB38. Regulates the trafficking of melanogenic enzymes TYR, TYRP1 and DCT/TYRP2 to melanosomes in melanocytes by inactivating RAB32 and RAB38. Inhibits RAB32 and RAB38 activation both directly by promoting their GTPase activity and indirectly by disrupting the RAB9A-HPS4 interaction which is required for RAB32/38 activation. This is Small G protein signaling modulator 2 (Sgsm2) from Mus musculus (Mouse).